We begin with the raw amino-acid sequence, 561 residues long: Zinc finger protein 394 (561 aa).

Residues 1–61 (MNSSLTAQRR…NYPAASPDPE (61 aa)) form a disordered region. Residue Ser12 is modified to Phosphoserine. Lys40 is covalently cross-linked (Glycyl lysine isopeptide (Lys-Gly) (interchain with G-Cter in SUMO2)). Residues 64-146 (RLHFRQLRYQ…AVVRALQRAL (83 aa)) enclose the SCAN box domain. One can recognise a KRAB domain in the interval 155 to 230 (VTFEDTAVSL…LQEAFQGKRP (76 aa)). The segment at 182 to 201 (ESAQKDSGSTVPPSLESRVE) is disordered. Residues Lys203 and Lys228 each participate in a glycyl lysine isopeptide (Lys-Gly) (interchain with G-Cter in SUMO2) cross-link. The interval 231–285 (LFSKCGSTHEDRVEKQSGDPLPLKLENSPEAEGLNSISDVNKNGSIEGEDSKNNE) is disordered. Residues 237 to 247 (STHEDRVEKQS) show a composition bias toward basic and acidic residues. A Glycyl lysine isopeptide (Lys-Gly) (interchain with G-Cter in SUMO2) cross-link involves residue Lys254. Over residues 265-274 (NSISDVNKNG) the composition is skewed to polar residues. Lys282 participates in a covalent cross-link: Glycyl lysine isopeptide (Lys-Gly) (interchain with G-Cter in SUMO2). 7 consecutive C2H2-type zinc fingers follow at residues 358 to 380 (YKCGNCGKSFKQRSDLFRHQRIH), 386 to 408 (YGCQECGKSFSQSAALTKHQRTH), 414 to 436 (YTCLKCGERFRQNSHLNRHQSTH), 442 to 463 (FKCEECGETCHISNLFRHQRLH), 469 to 491 (YKCEECEKSFKQRSDLFKHHRIH), 497 to 519 (YGCSVCGKRFNQSATLIKHQRIH), and 525 to 547 (YKCLECGERFRQSTHLIRHQRIH). Residue Lys443 forms a Glycyl lysine isopeptide (Lys-Gly) (interchain with G-Cter in SUMO2) linkage.

The protein belongs to the krueppel C2H2-type zinc-finger protein family.

It is found in the nucleus. Functionally, may be involved in transcriptional regulation. The polypeptide is Zinc finger protein 394 (ZNF394) (Homo sapiens (Human)).